A 206-amino-acid polypeptide reads, in one-letter code: Emopamil-binding protein-like (206 aa).

4 consecutive transmembrane segments (helical) span residues E10 to L30, G42 to V62, V101 to V121, and C165 to W185. The region spanning A39–L184 is the EXPERA domain.

The protein belongs to the EBP family. In terms of assembly, homodimer. As to expression, widely expressed with highest levels in liver, lung and kidney.

It is found in the endoplasmic reticulum membrane. In terms of biological role, does not possess sterol isomerase activity and does not bind sigma ligands. The chain is Emopamil-binding protein-like (EBPL) from Homo sapiens (Human).